A 328-amino-acid chain; its full sequence is scyllo-inositol 2-dehydrogenase (NADP(+)) IolU (328 aa).

Belongs to the Gfo/Idh/MocA family.

The enzyme catalyses scyllo-inositol + NADP(+) = scyllo-inosose + NADPH + H(+). Its function is as follows. Catalyzes the NADPH-dependent reduction of scyllo-inosose (SIS) to scyllo-inositol (SI) in vitro, but is unable to dehydrogenate scyllo-inositol and myo-inositol. Is less efficient than the functional paralog IolW. Under physiological conditions, may primarily function as an NADPH-dependent oxidoreductase that reduces carbonyl group(s) in its substrates. Cannot use NADH instead of NADPH. In Bacillus subtilis (strain 168), this protein is scyllo-inositol 2-dehydrogenase (NADP(+)) IolU.